The chain runs to 156 residues: Calglandulin (156 aa).

EF-hand domains lie at 8 to 43 (EQITEYKGIFEMFDEEGNGLVKTDDLESLMSLIGIN), 44 to 79 (PTKRDLANMAKDVDKDKKGTFNCEGFLVLMGIYHEK), 82 to 117 (NQDEELRAAFKVFDKEHKGYIEWDTLKYVLMNAGEP), and 118 to 153 (LNEHEAELMMKEADKDGDGTIDYEEFVAMMTGESFK). Positions 131, 133, 135, 137, and 142 each coordinate Ca(2+).

The protein belongs to the calmodulin family. Calglandulin subfamily. Expressed by the venom gland.

The protein resides in the cytoplasm. Functionally, may be involved in the cellular control mechanism of the secretion of toxins from the gland into the venom. The protein is Calglandulin of Tropidechis carinatus (Australian rough-scaled snake).